The sequence spans 85 residues: Large ribosomal subunit protein bL27 (85 aa).

Residues 1 to 20 (MATKKAGGSTRNGRDSEAKR) form a disordered region.

Belongs to the bacterial ribosomal protein bL27 family.

The chain is Large ribosomal subunit protein bL27 from Actinobacillus succinogenes (strain ATCC 55618 / DSM 22257 / CCUG 43843 / 130Z).